A 155-amino-acid chain; its full sequence is Antitoxin HicB 1 (155 aa).

In terms of domain architecture, HTH cro/C1-type spans 99–153; sequence MLNAFLDSKLTQIELANRMGVKKQEVTRIFDLRHSTKIDTVGKVASAIGHQLTLS. Positions 110-129 form a DNA-binding region, H-T-H motif; the sequence is QIELANRMGVKKQEVTRIFD.

The protein belongs to the HicB antitoxin family. Probably forms a complex with the probable mRNA interferase HicA1 (its cognate toxin); when complexed with HicA 1 inhibits the toxin activity.

Antitoxin component of a type II toxin-antitoxin (TA) system. Functions as an mRNA interferase antitoxin preventing effects of the HicA 1 toxin. This chain is Antitoxin HicB 1 (hicB1), found in Photorhabdus laumondii subsp. laumondii (strain DSM 15139 / CIP 105565 / TT01) (Photorhabdus luminescens subsp. laumondii).